The chain runs to 179 residues: MASTDPMTRRFAVACGVLSQYVKANSSQPSTAAPVAQGVSGLMAAAAAAAAAPVVQEPGCEVDGGGQQFTIFYAGKVVVIDRCTPAMAAELMRFASAAQGGGGAPEAPPALVDMPIARKASLKRFLAKRKATPASARSSYVVRAAAAEEEQPPAKKAKAAVERREDWLALGSLGHMHSR.

The Tify domain maps to 62 to 97; that stretch reads VDGGGQQFTIFYAGKVVVIDRCTPAMAAELMRFASA. Positions 115–140 match the Jas motif; sequence PIARKASLKRFLAKRKATPASARSSY. The Nuclear localization signal signature appears at 117–124; that stretch reads ARKASLKR.

The protein belongs to the TIFY/JAZ family. As to quaternary structure, interacts with BHLH148. Interacts with COI1A in a coronatine-dependent manner. Interacts with COI1B in a coronatine-dependent manner. Coronatine is an analog of jasmonoyl isoleucine (JA-Ile). Interacts with RSS3. Forms a ternary complex with RSS3 and BHLH094 in the nucleus. Interacts with BHLH062 and NINJA1. Interacts with MYB30. Post-translationally, ubiquitinated. Targeted for degradation by the SCF(COI1) E3 ubiquitin ligase-proteasome pathway during jasmonate signaling.

The protein localises to the nucleus. In terms of biological role, repressor of jasmonate (JA) responses. Forms a ternary complex with RSS3 and BHLH94 to negatively regulate JA-responsive genes. Acts as a positive regulator of tolerance to salt stress. Involved in salt tolerance by modulating potassium homeostasis through JA signaling and regulation of the expression of potassium ion transporter genes. Acts as a transcriptional regulator targeted by the SCF(COI1) E3 ubiquitin ligase complexes in the JA signaling pathway, and interacts with BHLH062 that may directly regulate the ion transporter genes. Acts as a positive regulator of tolerance to dehydration stress. Acts as a negative regulator of tolerance to cold stress by interacting with MYB30. The sequence is that of Protein TIFY 11a from Oryza sativa subsp. japonica (Rice).